A 101-amino-acid polypeptide reads, in one-letter code: Small ribosomal subunit protein uS14 (101 aa).

The segment at 1-21 (MAKVSLIKKNESRKKKSQSLH) is disordered. The span at 11–21 (ESRKKKSQSLH) shows a compositional bias: basic residues.

This sequence belongs to the universal ribosomal protein uS14 family. Part of the 30S ribosomal subunit. Contacts proteins S3 and S10.

Its function is as follows. Binds 16S rRNA, required for the assembly of 30S particles and may also be responsible for determining the conformation of the 16S rRNA at the A site. The protein is Small ribosomal subunit protein uS14 of Rickettsia canadensis (strain McKiel).